Consider the following 406-residue polypeptide: Transposase for insertion sequence element IS1001 (406 aa).

Belongs to the transposase 12 family.

Its function is as follows. Involved in the transposition of the insertion sequence. This is Transposase for insertion sequence element IS1001 (tnpA) from Bordetella parapertussis.